The sequence spans 217 residues: Putative thymidylate synthase (217 aa).

Residue C139 is part of the active site.

This sequence belongs to the thymidylate synthase family. Archaeal-type ThyA subfamily. As to quaternary structure, monomer.

The protein localises to the cytoplasm. Its pathway is pyrimidine metabolism; dTTP biosynthesis. In terms of biological role, may catalyze the biosynthesis of dTMP using an unknown cosubstrate. This Methanosarcina mazei (strain ATCC BAA-159 / DSM 3647 / Goe1 / Go1 / JCM 11833 / OCM 88) (Methanosarcina frisia) protein is Putative thymidylate synthase.